Reading from the N-terminus, the 82-residue chain is Small ribosomal subunit protein bS16 (82 aa).

Belongs to the bacterial ribosomal protein bS16 family.

The chain is Small ribosomal subunit protein bS16 from Caldanaerobacter subterraneus subsp. tengcongensis (strain DSM 15242 / JCM 11007 / NBRC 100824 / MB4) (Thermoanaerobacter tengcongensis).